A 388-amino-acid chain; its full sequence is Succinate--CoA ligase [ADP-forming] subunit beta (388 aa).

The 236-residue stretch at 9 to 244 (KEILRKFGVA…PDEEDPKETQ (236 aa)) folds into the ATP-grasp domain. ATP is bound by residues lysine 46, 53-55 (GRG), glutamate 99, cysteine 102, and glutamate 107. Residues asparagine 199 and aspartate 213 each coordinate Mg(2+). Substrate-binding positions include asparagine 264 and 321-323 (GIM).

This sequence belongs to the succinate/malate CoA ligase beta subunit family. In terms of assembly, heterotetramer of two alpha and two beta subunits. Mg(2+) is required as a cofactor.

It catalyses the reaction succinate + ATP + CoA = succinyl-CoA + ADP + phosphate. The catalysed reaction is GTP + succinate + CoA = succinyl-CoA + GDP + phosphate. It participates in carbohydrate metabolism; tricarboxylic acid cycle; succinate from succinyl-CoA (ligase route): step 1/1. Succinyl-CoA synthetase functions in the citric acid cycle (TCA), coupling the hydrolysis of succinyl-CoA to the synthesis of either ATP or GTP and thus represents the only step of substrate-level phosphorylation in the TCA. The beta subunit provides nucleotide specificity of the enzyme and binds the substrate succinate, while the binding sites for coenzyme A and phosphate are found in the alpha subunit. This chain is Succinate--CoA ligase [ADP-forming] subunit beta, found in Anaeromyxobacter dehalogenans (strain 2CP-C).